The sequence spans 732 residues: Phosphoribosylformylglycinamidine synthase subunit PurL (732 aa).

Residue H32 is part of the active site. ATP is bound at residue Y35. E81 contacts Mg(2+). Substrate is bound by residues 82 to 85 (SHNH) and R104. Catalysis depends on H83, which acts as the Proton acceptor. D105 is a Mg(2+) binding site. Residue Q230 coordinates substrate. Position 258 (D258) interacts with Mg(2+). Position 302–304 (302–304 (ESQ)) interacts with substrate. ATP contacts are provided by D485 and G522. N523 is a Mg(2+) binding site. A substrate-binding site is contributed by S525.

Belongs to the FGAMS family. As to quaternary structure, monomer. Part of the FGAM synthase complex composed of 1 PurL, 1 PurQ and 2 PurS subunits.

It localises to the cytoplasm. It carries out the reaction N(2)-formyl-N(1)-(5-phospho-beta-D-ribosyl)glycinamide + L-glutamine + ATP + H2O = 2-formamido-N(1)-(5-O-phospho-beta-D-ribosyl)acetamidine + L-glutamate + ADP + phosphate + H(+). The protein operates within purine metabolism; IMP biosynthesis via de novo pathway; 5-amino-1-(5-phospho-D-ribosyl)imidazole from N(2)-formyl-N(1)-(5-phospho-D-ribosyl)glycinamide: step 1/2. Functionally, part of the phosphoribosylformylglycinamidine synthase complex involved in the purines biosynthetic pathway. Catalyzes the ATP-dependent conversion of formylglycinamide ribonucleotide (FGAR) and glutamine to yield formylglycinamidine ribonucleotide (FGAM) and glutamate. The FGAM synthase complex is composed of three subunits. PurQ produces an ammonia molecule by converting glutamine to glutamate. PurL transfers the ammonia molecule to FGAR to form FGAM in an ATP-dependent manner. PurS interacts with PurQ and PurL and is thought to assist in the transfer of the ammonia molecule from PurQ to PurL. This is Phosphoribosylformylglycinamidine synthase subunit PurL from Methanococcus aeolicus (strain ATCC BAA-1280 / DSM 17508 / OCM 812 / Nankai-3).